Consider the following 245-residue polypeptide: 4-hydroxy-tetrahydrodipicolinate reductase (245 aa).

Residues 7–12 (GAKGKV), 75–77 (GTT), and 102–105 (APNF) each bind NAD(+). His-132 acts as the Proton donor/acceptor in catalysis. A (S)-2,3,4,5-tetrahydrodipicolinate-binding site is contributed by His-133. Lys-136 acts as the Proton donor in catalysis. 142–143 (GT) lines the (S)-2,3,4,5-tetrahydrodipicolinate pocket.

It belongs to the DapB family.

It localises to the cytoplasm. It catalyses the reaction (S)-2,3,4,5-tetrahydrodipicolinate + NAD(+) + H2O = (2S,4S)-4-hydroxy-2,3,4,5-tetrahydrodipicolinate + NADH + H(+). The catalysed reaction is (S)-2,3,4,5-tetrahydrodipicolinate + NADP(+) + H2O = (2S,4S)-4-hydroxy-2,3,4,5-tetrahydrodipicolinate + NADPH + H(+). It participates in amino-acid biosynthesis; L-lysine biosynthesis via DAP pathway; (S)-tetrahydrodipicolinate from L-aspartate: step 4/4. In terms of biological role, catalyzes the conversion of 4-hydroxy-tetrahydrodipicolinate (HTPA) to tetrahydrodipicolinate. In Mycobacterium tuberculosis (strain ATCC 25177 / H37Ra), this protein is 4-hydroxy-tetrahydrodipicolinate reductase.